Consider the following 105-residue polypeptide: Cuticle protein AMP1B (105 aa).

The disordered stretch occupies residues 1–21; sequence DRDAQTLTDERSDQGDGNFRY. Positions 16–81 constitute a Chitin-binding type R&amp;R domain; sequence DGNFRYEFET…PSSDLLPVPP (66 aa).

In terms of tissue distribution, arthrodial membrane.

The protein is Cuticle protein AMP1B of Homarus americanus (American lobster).